We begin with the raw amino-acid sequence, 279 residues long: Undecaprenyl-diphosphatase (279 aa).

The next 8 helical transmembrane spans lie at 2 to 22, 44 to 64, 85 to 105, 113 to 133, 163 to 183, 188 to 208, 225 to 245, and 255 to 275; these read LFIELLKAIFFGVIEGVTEWL, AFMEMFNIVIQLGAIIAVIVI, WQLWLKVAIACIPSIIIAVPL, FNHMLPIAIALIVYGVAFLWI, VLSIIPGTSRSGATILGAIIL, TVAADFTFFLAIPTMFGYSGL, LLVLLVASLTAFAVSLYVIKL, and FTVFGRYRIVLGSLLIVYSVF.

Belongs to the UppP family.

The protein localises to the cell membrane. The enzyme catalyses di-trans,octa-cis-undecaprenyl diphosphate + H2O = di-trans,octa-cis-undecaprenyl phosphate + phosphate + H(+). Catalyzes the dephosphorylation of undecaprenyl diphosphate (UPP). Confers resistance to bacitracin. In Streptococcus equi subsp. zooepidemicus (strain H70), this protein is Undecaprenyl-diphosphatase.